We begin with the raw amino-acid sequence, 613 residues long: Coiled-coil domain-containing protein 116 (613 aa).

The interval 41–68 (KPGRVPHPPSTCGSSALQGQRRNKRHPQ) is disordered. Residues 51 to 60 (TCGSSALQGQ) are compositionally biased toward polar residues. Residues 79 to 104 (ESQVLDSLETVVEKATERMAAMKTEA) are a coiled coil. Disordered stretches follow at residues 329-395 (CRDG…AQVA), 509-541 (RQAS…QATE), and 565-613 (MSAC…EDGV). Serine 386 carries the post-translational modification Phosphoserine. Polar residues predominate over residues 512-539 (SRLSTSHCSTETPSVQQEPATHTAQDQA). Over residues 577–589 (KSKDMDNEGRDKA) the composition is skewed to basic and acidic residues. Over residues 590–613 (EIEDEDEDEFKDEDQDEDKDEDGV) the composition is skewed to acidic residues.

It localises to the cytoplasm. The protein localises to the cytoskeleton. The protein resides in the microtubule organizing center. Its subcellular location is the centrosome. The sequence is that of Coiled-coil domain-containing protein 116 (CCDC116) from Homo sapiens (Human).